A 550-amino-acid polypeptide reads, in one-letter code: MAAPAGGGGSAVSVLAPNGRRHTVKVTPSTVLLQVLEDTCRRQDFNPSEYDLKFQRTVLDLSLQWRFANLPNNAKLEMVPVSRSREGPENIVRIAFQLDDGSRLQDAFCSRQTLWELLSHFAQTRERLQQLGEKTPVCVYMRNEVTGRAALQNTTLQSLGLTGGSATIRFVIKQCDTAGKQESIAVRSKAPGSPVSSLSADQASSSTLLPLNSGEFSRGDLNHEGDANTSGTGLEGGPKPTDAQTKQSTSEPASAPFVPFSGGGQRLGGPSASLRPLTSPSANSSKSFSGPGGPSKPKKPKPGEEPQQEPEPPVDRDPVVYHPDLEDLLQPWPAEVPDEFFEVTVDDVRRRLAQLKSERKRLEEAPLVTKAFREAQMKEKLERYPKVALRVLFPDRYILQGFFRPSETVGDLRDFVRSHLGNPELSFYLFIAPPKMVLDDHTLTLFQANLFPAALVHFGAEEPTGLYLEPGLLEHTVSPSTADVLVARCMSRASGSPPLLPAPDPVSLESEPIAEDGALGPPEPIQGTAQPVKRSLGKVPKWLKLPASKR.

The residue at position 2 (Ala-2) is an N-acetylalanine. Residues 185-320 form a disordered region; it reads AVRSKAPGSP…EPPVDRDPVV (136 aa). Ser-193 bears the Phosphoserine mark. Positions 193–206 are enriched in low complexity; it reads SPVSSLSADQASSS. Basic and acidic residues predominate over residues 217–226; the sequence is SRGDLNHEGD. Residues 242–252 are compositionally biased toward polar residues; the sequence is DAQTKQSTSEP. The tract at residues 313 to 376 is interaction with GLUT4; that stretch reads PVDRDPVVYH…LVTKAFREAQ (64 aa). In terms of domain architecture, UBX spans 382-458; it reads ERYPKVALRV…NLFPAALVHF (77 aa). The residue at position 496 (Ser-496) is a Phosphoserine. Residues 496–550 form a disordered region; the sequence is SPPLLPAPDPVSLESEPIAEDGALGPPEPIQGTAQPVKRSLGKVPKWLKLPASKR.

Interacts with VCP. Interacts with VCPKMT. Interacts with GLUT4. In terms of tissue distribution, ubiquitous.

The protein localises to the endomembrane system. It is found in the endoplasmic reticulum-Golgi intermediate compartment membrane. It localises to the cytoplasm. Its subcellular location is the nucleus. Its function is as follows. Enhances VCP methylation catalyzed by VCPKMT. Tethering protein that sequesters GLUT4-containing vesicles in the cytoplasm in the absence of insulin. Modulates the amount of GLUT4 that is available at the cell surface. The sequence is that of Tether containing UBX domain for GLUT4 (Aspscr1) from Mus musculus (Mouse).